The primary structure comprises 161 residues: Nucleotide-binding protein Veis_3464 (161 aa).

Belongs to the YajQ family.

Nucleotide-binding protein. The sequence is that of Nucleotide-binding protein Veis_3464 from Verminephrobacter eiseniae (strain EF01-2).